We begin with the raw amino-acid sequence, 459 residues long: ATP-dependent protease ATPase subunit HslU (459 aa).

ATP-binding positions include Val-18, 60 to 65 (GVGKTE), Asp-272, Glu-337, and Arg-409.

Belongs to the ClpX chaperone family. HslU subfamily. As to quaternary structure, a double ring-shaped homohexamer of HslV is capped on each side by a ring-shaped HslU homohexamer. The assembly of the HslU/HslV complex is dependent on binding of ATP.

It is found in the cytoplasm. Its function is as follows. ATPase subunit of a proteasome-like degradation complex; this subunit has chaperone activity. The binding of ATP and its subsequent hydrolysis by HslU are essential for unfolding of protein substrates subsequently hydrolyzed by HslV. HslU recognizes the N-terminal part of its protein substrates and unfolds these before they are guided to HslV for hydrolysis. This is ATP-dependent protease ATPase subunit HslU from Thermoanaerobacter pseudethanolicus (strain ATCC 33223 / 39E) (Clostridium thermohydrosulfuricum).